The sequence spans 539 residues: Dopamine receptor 2 (539 aa).

At 1–113 (MVDDNGSSPE…LPNDRVGLLA (113 aa)) the chain is on the extracellular side. N-linked (GlcNAc...) asparagine glycosylation is found at N5, N31, N47, and N68. Residues 114 to 134 (FLFLFSFATVFGNSLVILAVI) form a helical membrane-spanning segment. The Cytoplasmic segment spans residues 135 to 145 (RERYLHTATNY). Residues 146 to 166 (FITSLAVADCLVGLVVMPFSA) traverse the membrane as a helical segment. The Extracellular portion of the chain corresponds to 167–189 (LYEVLENTWFFGTDWCDIWRSLD). A disulfide bond links C182 and C261. A helical transmembrane segment spans residues 190-206 (VLFSTASILNLCVISLD). Residues 207–227 (RYWAITDPFSYPMRMTVKRAA) lie on the Cytoplasmic side of the membrane. A helical transmembrane segment spans residues 228 to 248 (GLIAAVWICSSAISFPAIVWW). At 249–266 (RAARDGEMPAYKCTFTEH) the chain is on the extracellular side. A helical membrane pass occupies residues 267 to 287 (LGYLVFSSTISFYLPLLVMVF). The Cytoplasmic portion of the chain corresponds to 288–420 (TYCRIYRAAV…FAKEKKAAKT (133 aa)). The interval 326-387 (GGTTRDQQNQ…EPDDEPLSAL (62 aa)) is disordered. A compositionally biased stretch (gly residues) spans 337 to 352 (SGGGGGGGGGGGGGGS). A compositionally biased stretch (basic residues) spans 356-367 (SHSHSHHHHHNH). The helical transmembrane segment at 421-441 (LGIVMGVFIICWLPFFVVNLL) threads the bilayer. At 442 to 453 (SGFCIECIEHEE) the chain is on the extracellular side. A helical membrane pass occupies residues 454 to 474 (IVSAIVTWLGWINSCMNPVIY). Residues 475 to 539 (ACWSRDFRRA…RHNSCEQTYI (65 aa)) are Cytoplasmic-facing. 2 S-palmitoyl cysteine lipidation sites follow: C492 and C493.

Belongs to the G-protein coupled receptor 1 family. In terms of tissue distribution, expressed in both central and peripheral nervous systems.

The protein localises to the cell membrane. Receptor for dopamine. The activity of this receptor is mediated by G proteins which activate adenylyl cyclase. Also capable of generating a calcium signal. In terms of antagonist responses, would be classed with the D1-like dopamine receptor group. This receptor is an attractive candidate for initiating biochemical cascades underlying olfactory learning. The sequence is that of Dopamine receptor 2 (Dop1R2) from Drosophila melanogaster (Fruit fly).